We begin with the raw amino-acid sequence, 161 residues long: Nucleotide-binding protein Ajs_2750 (161 aa).

Belongs to the YajQ family.

Nucleotide-binding protein. The polypeptide is Nucleotide-binding protein Ajs_2750 (Acidovorax sp. (strain JS42)).